The chain runs to 297 residues: MEINGVEIEDTYAEAFPIKIARVLITAVTKRWAQVAATEATGFGTSVIMCPAEAGIERFASPSETPDGRPGAYIQICTFKYEALEEQLLERIGQCVLTAPTTAVFNGLPDSEKQFNVGFKLKFFGDGMESEAQIAGRKVFKVPIMEGDFVTEDNIGAIAGIAGGNFFIFGDSQMSALTAAEAAVDAIAELEGTITPFPGGIVASGSKSGANKYKFLKATANEKFCPSIKDKVENTEIPADVNAVYEIVINGLDEASIKAAMKAGIEAAVTVPGIKKISAGNYGGKLGKYQFKLHELF.

It belongs to the FTR family. In terms of assembly, homotetramer.

It localises to the cytoplasm. The catalysed reaction is N-formylmethanofuran + 5,6,7,8-tetrahydromethanopterin + H(+) = N(5)-formyl-5,6,7,8-tetrahydromethanopterin + methanofuran. The protein operates within one-carbon metabolism; methanogenesis from CO(2); 5,10-methenyl-5,6,7,8-tetrahydromethanopterin from CO(2): step 2/3. Its function is as follows. Catalyzes the reversible transfer of a formyl group from formylmethanofuran (formyl-MFR) to tetrahydromethanopterin (H(4)MPT) to produce 5-formyl tetrahydromethanopterin (5-formyl-H(4)MPT) and methanofuran (MFR). The chain is Formylmethanofuran--tetrahydromethanopterin formyltransferase from Methanosarcina mazei (strain ATCC BAA-159 / DSM 3647 / Goe1 / Go1 / JCM 11833 / OCM 88) (Methanosarcina frisia).